The sequence spans 255 residues: 2-dehydro-3,6-dideoxy-6-sulfogluconate aldolase (255 aa).

Residue His38 is the Proton acceptor of the active site. Residues Glu141 and Asp167 each contribute to the a divalent metal cation site.

The protein belongs to the HpcH/HpaI aldolase family. Homohexamer; trimer of dimers. A divalent metal cation serves as cofactor.

The enzyme catalyses 2-dehydro-3,6-dideoxy-6-sulfo-D-gluconate = (2S)-3-sulfolactaldehyde + pyruvate. Its function is as follows. Catalyzes the retro-aldol cleavage of 2-dehydro-3,6-dideoxy-6-sulfo-D-gluconate to (2S)-3-sulfolactaldehyde and pyruvate. Is involved in a degradation pathway of sulfoquinovose (SQ) that allows P.putida SQ1 to use SQ as the sole carbon and energy source for growth. This chain is 2-dehydro-3,6-dideoxy-6-sulfogluconate aldolase, found in Pseudomonas putida (Arthrobacter siderocapsulatus).